The following is a 438-amino-acid chain: Chromosomal replication initiator protein DnaA (438 aa).

The domain I, interacts with DnaA modulators stretch occupies residues 1-68 (MKDNILSALK…VVKESLGKDA (68 aa)). The tract at residues 68-98 (ATFEIVYKEIDITQENEEKGPLVRKRPLLIT) is domain II. The interval 99–314 (PLNPKYTFEN…GAILKLIAYK (216 aa)) is domain III, AAA+ region. ATP is bound by residues glycine 142, glycine 144, lysine 145, and threonine 146. The tract at residues 315–438 (NLYGSLNLSI…TKNFAQGESI (124 aa)) is domain IV, binds dsDNA.

The protein belongs to the DnaA family. In terms of assembly, oligomerizes as a right-handed, spiral filament on DNA at oriC.

The protein resides in the cytoplasm. Its function is as follows. Plays an essential role in the initiation and regulation of chromosomal replication. ATP-DnaA binds to the origin of replication (oriC) to initiate formation of the DNA replication initiation complex once per cell cycle. Binds the DnaA box (a 9 base pair repeat at the origin) and separates the double-stranded (ds)DNA. Forms a right-handed helical filament on oriC DNA; dsDNA binds to the exterior of the filament while single-stranded (ss)DNA is stabiized in the filament's interior. The ATP-DnaA-oriC complex binds and stabilizes one strand of the AT-rich DNA unwinding element (DUE), permitting loading of DNA polymerase. After initiation quickly degrades to an ADP-DnaA complex that is not apt for DNA replication. Binds acidic phospholipids. This Thermosipho africanus (strain TCF52B) protein is Chromosomal replication initiator protein DnaA.